An 829-amino-acid polypeptide reads, in one-letter code: Transmembrane protease serine 7 (829 aa).

Topologically, residues 1 to 62 (MDKEKSDPSC…RAPFWNVQNK (62 aa)) are cytoplasmic. The tract at residues 26–52 (SVPGKLPGRRPPRKPIGKPRPRKQPKK) is disordered. A compositionally biased stretch (basic residues) spans 32–52 (PGRRPPRKPIGKPRPRKQPKK). A helical; Signal-anchor for type II membrane protein transmembrane segment spans residues 63 to 83 (IILFTVFLFILAVTAWTLLWL). The Extracellular portion of the chain corresponds to 84–829 (YISKTESKDA…WIHKYVPSLL (746 aa)). The region spanning 92–220 (DAFYFVGMFR…DSVVLNAGLR (129 aa)) is the SEA domain. Intrachain disulfides connect Cys-233–Cys-259, Cys-285–Cys-308, and Cys-351–Cys-382. 2 CUB domains span residues 233 to 346 (CSRY…FEVI) and 351 to 467 (CEST…YNIS). N-linked (GlcNAc...) asparagine glycosylation is found at Asn-401 and Asn-465. 3 LDL-receptor class A domains span residues 469-505 (PCPA…LFCV), 503-540 (FCVT…QNCT), and 544-581 (PCTS…EGCG). Disulfide bonds link Cys-470/Cys-482, Cys-477/Cys-495, Cys-489/Cys-504, Cys-511/Cys-530, Cys-524/Cys-539, Cys-545/Cys-557, Cys-552/Cys-571, Cys-565/Cys-580, and Cys-617/Cys-633. A Peptidase S1 domain is found at 592-826 (IVGGSDSQEG…FVPWIHKYVP (235 aa)). Residues His-632 and Asp-680 each act as charge relay system in the active site. 3 cysteine pairs are disulfide-bonded: Cys-716–Cys-782, Cys-748–Cys-761, and Cys-772–Cys-802. The active-site Charge relay system is the Ser-776.

This sequence belongs to the peptidase S1 family. In terms of assembly, forms a heterodimer with SERPINA5. Post-translationally, N-glycosylated. In terms of tissue distribution, expressed in brain, eye, testis, skin, epididymis and salivary gland with lower levels in heart, skeletal muscle, thymus, ovary, prostate and uterus.

Its subcellular location is the cell membrane. Its function is as follows. Serine protease which preferentially hydrolyzes peptides with Arg at the P1 position. This Mus musculus (Mouse) protein is Transmembrane protease serine 7 (Tmprss7).